Here is a 463-residue protein sequence, read N- to C-terminus: ATP synthase subunit beta (463 aa).

152–159 serves as a coordination point for ATP; the sequence is GGAGVGKT.

This sequence belongs to the ATPase alpha/beta chains family. In terms of assembly, F-type ATPases have 2 components, CF(1) - the catalytic core - and CF(0) - the membrane proton channel. CF(1) has five subunits: alpha(3), beta(3), gamma(1), delta(1), epsilon(1). CF(0) has three main subunits: a(1), b(2) and c(9-12). The alpha and beta chains form an alternating ring which encloses part of the gamma chain. CF(1) is attached to CF(0) by a central stalk formed by the gamma and epsilon chains, while a peripheral stalk is formed by the delta and b chains.

Its subcellular location is the cell inner membrane. It carries out the reaction ATP + H2O + 4 H(+)(in) = ADP + phosphate + 5 H(+)(out). Produces ATP from ADP in the presence of a proton gradient across the membrane. The catalytic sites are hosted primarily by the beta subunits. This is ATP synthase subunit beta from Shewanella oneidensis (strain ATCC 700550 / JCM 31522 / CIP 106686 / LMG 19005 / NCIMB 14063 / MR-1).